Here is an 887-residue protein sequence, read N- to C-terminus: Alanine--tRNA ligase (887 aa).

Zn(2+)-binding residues include histidine 564, histidine 568, cysteine 676, and histidine 680.

Belongs to the class-II aminoacyl-tRNA synthetase family. Zn(2+) serves as cofactor.

It localises to the cytoplasm. The catalysed reaction is tRNA(Ala) + L-alanine + ATP = L-alanyl-tRNA(Ala) + AMP + diphosphate. Catalyzes the attachment of alanine to tRNA(Ala) in a two-step reaction: alanine is first activated by ATP to form Ala-AMP and then transferred to the acceptor end of tRNA(Ala). Also edits incorrectly charged Ser-tRNA(Ala) and Gly-tRNA(Ala) via its editing domain. The polypeptide is Alanine--tRNA ligase (Rhizobium meliloti (strain 1021) (Ensifer meliloti)).